We begin with the raw amino-acid sequence, 237 residues long: DNA replication inhibitor toxin SocB (237 aa).

As to quaternary structure, interacts with cognate antitoxin SocA and with beta sliding clamp (dnaN). Degraded by ClpXP, recognition of SocB by ClpX requires SocA.

The protein localises to the cytoplasm. Toxic component of an atypical type II toxin-antitoxin (TA) system. Upon overexpression in the absence of its cognate antitoxin SocA, leads to inhibition of colony formation, cellular filamentation, incomplete DNA replication and induction of the SOS response. Exercises toxicity by binding the beta sliding clamp (dnaN), blocking DNA replication and leading to premature replication fork collapse and incomplete cell division. Unlike most type II TA systems, the SocB toxin is unstable and targeted by its cognate antitoxin SocA for degradation by ClpXP. Not toxic upon expression in E.coli. This is DNA replication inhibitor toxin SocB from Caulobacter vibrioides (strain NA1000 / CB15N) (Caulobacter crescentus).